A 298-amino-acid chain; its full sequence is Probable endonuclease 4 (298 aa).

H69, H111, E146, D180, H183, H215, D228, H230, and E260 together coordinate Zn(2+).

This sequence belongs to the AP endonuclease 2 family. It depends on Zn(2+) as a cofactor.

It carries out the reaction Endonucleolytic cleavage to 5'-phosphooligonucleotide end-products.. Endonuclease IV plays a role in DNA repair. It cleaves phosphodiester bonds at apurinic or apyrimidinic (AP) sites, generating a 3'-hydroxyl group and a 5'-terminal sugar phosphate. This is Probable endonuclease 4 from Bacillus cytotoxicus (strain DSM 22905 / CIP 110041 / 391-98 / NVH 391-98).